Consider the following 113-residue polypeptide: Hydrogenase maturation factor HypA (113 aa).

His2 lines the Ni(2+) pocket. Cys73, Cys76, Cys89, and Cys92 together coordinate Zn(2+).

It belongs to the HypA/HybF family.

Its function is as follows. Involved in the maturation of [NiFe] hydrogenases. Required for nickel insertion into the metal center of the hydrogenase. In Actinobacillus succinogenes (strain ATCC 55618 / DSM 22257 / CCUG 43843 / 130Z), this protein is Hydrogenase maturation factor HypA.